The sequence spans 182 residues: U1 small nuclear ribonucleoprotein C (182 aa).

The Matrin-type zinc-finger motif lies at 4–36 (YLCDYCQVWLTHDSQSVRKAHNAGRAHIQNVQD). Positions 129 to 182 (PQTTASSNTQLTQQQQSLPQTNEHQRARTHSNANNHFTKTHHQGQRSHQRFVRA) are disordered. The span at 130-150 (QTTASSNTQLTQQQQSLPQTN) shows a compositional bias: low complexity. The segment covering 166–182 (TKTHHQGQRSHQRFVRA) has biased composition (basic residues).

It belongs to the U1 small nuclear ribonucleoprotein C family. U1 snRNP is composed of the 7 core Sm proteins smb1, smd1, smd2, smd3, sme1, smf1 and smg1 (Sm proteins B, D1, D2, D3, E, F and G, respectively) that assemble in a heptameric protein ring on the Sm site of the small nuclear RNA to form the core snRNP, and at least 9 U1 snRNP-specific proteins usp101/U1-70K, usp102/U1-A, usp103/U1-C, usp106/LUC7, usp105/PRP39, usp104/PRP40, usp107/U1-H, usp108/U1-J and usp109/U1-L. usp103/U1-C interacts with U1 snRNA and the 5' splice-site region of the pre-mRNA.

The protein resides in the nucleus. Functionally, component of the spliceosomal U1 snRNP, which is essential for recognition of the pre-mRNA 5' splice-site and the subsequent assembly of the spliceosome. usp103/U1-C is directly involved in initial 5' splice-site recognition for both constitutive and regulated alternative splicing. The interaction with the 5' splice-site seems to precede base-pairing between the pre-mRNA and the U1 snRNA. Stimulates commitment or early (E) complex formation by stabilizing the base pairing of the 5' end of the U1 snRNA and the 5' splice-site region. The sequence is that of U1 small nuclear ribonucleoprotein C (usp103) from Schizosaccharomyces pombe (strain 972 / ATCC 24843) (Fission yeast).